The chain runs to 341 residues: MNKTLIALAVSAAAVATGAYADGINQSGDKAGSTVYSAKGTSLEVGGRAEARLSLKDGKAQDNSRVRLNFLGKAEINDSLYGVGFYEGEFTTNDQGKNASNNSLDNRYTYAGIGGTYGEVTYGKNDGALGVITDFTDIMSYHGNTAAEKIAVADRVDNMLAYKGQFGDLGVKASYRFADRNAVDAMGNVVTETNAAKYSDNGEDGYSLSAIYTFGDTGFNVGAGYADQDDQNEYMLAASYRMENLYFAGLFTDGELAKDVDYTGYELAAGYKLGQAAFTATYNNAETAKETSADNFAIDATYYFKPNFRSYISYQFNLLDSDKVGKVASEDELAIGLRYDF.

The first 21 residues, 1-21 (MNKTLIALAVSAAAVATGAYA), serve as a signal peptide directing secretion.

The protein belongs to the Gram-negative porin family. Homotrimer.

Its subcellular location is the cell outer membrane. Its function is as follows. Forms pores that allow passive diffusion of small molecules across the outer membrane. This is Outer membrane protein U (ompU) from Vibrio cholerae serotype O1 (strain ATCC 39315 / El Tor Inaba N16961).